Here is a 430-residue protein sequence, read N- to C-terminus: Trigger factor (430 aa).

Residues 163–248 (GNIAIIDFKG…IKDIKVKELP (86 aa)) enclose the PPIase FKBP-type domain.

This sequence belongs to the FKBP-type PPIase family. Tig subfamily.

Its subcellular location is the cytoplasm. It carries out the reaction [protein]-peptidylproline (omega=180) = [protein]-peptidylproline (omega=0). Its function is as follows. Involved in protein export. Acts as a chaperone by maintaining the newly synthesized protein in an open conformation. Functions as a peptidyl-prolyl cis-trans isomerase. The polypeptide is Trigger factor (Clostridium botulinum (strain ATCC 19397 / Type A)).